A 342-amino-acid chain; its full sequence is Inactive chitinase-like protein 2 (342 aa).

The signal sequence occupies residues 1–19 (MKEIVRALEGYGPPKDKAA). The Chitin-binding type-1 domain occupies 20-60 (EQCGWQAGGALCPGGLCCSQYGWCANTPEYCGSGCQSQCDG). Disulfide bonds link Cys-22/Cys-37, Cys-31/Cys-43, Cys-36/Cys-80, Cys-84/Cys-88, Cys-122/Cys-184, Cys-196/Cys-204, and Cys-301/Cys-333.

This sequence belongs to the glycosyl hydrolase 19 family. Chitinase class I subfamily.

Functionally, inactive chitinase-like protein that does not exhibit hydrolytic activity toward chitin. Binds strongly to chitin and possesses antifungal activity toward the fungal pathogen Altenaria alternata in plate assays. Probably involved in defense against fungal pathogens through a mechanism that only involves carbohydrate binding. The chain is Inactive chitinase-like protein 2 from Hevea brasiliensis (Para rubber tree).